A 112-amino-acid chain; its full sequence is UPF0102 protein JJD26997_0163 (112 aa).

It belongs to the UPF0102 family.

The protein is UPF0102 protein JJD26997_0163 of Campylobacter jejuni subsp. doylei (strain ATCC BAA-1458 / RM4099 / 269.97).